Consider the following 274-residue polypeptide: Putative phosphatase BUsg_029 (274 aa).

Aspartate 8 acts as the Nucleophile in catalysis. Aspartate 8 provides a ligand contact to Mg(2+). Leucine 9 is a binding site for phosphate. Residue aspartate 10 participates in Mg(2+) binding. Residues 42 to 43 and lysine 191 contribute to the phosphate site; that span reads SG. A Mg(2+)-binding site is contributed by aspartate 214. Phosphate is bound at residue asparagine 217.

It belongs to the HAD-like hydrolase superfamily. Cof family. The cofactor is Mg(2+).

The protein is Putative phosphatase BUsg_029 of Buchnera aphidicola subsp. Schizaphis graminum (strain Sg).